A 122-amino-acid chain; its full sequence is Small ribosomal subunit protein uS13 (122 aa).

The tract at residues 95–122 (GLPVRGQRTKTNARTRKGPKKTIAGKKK) is disordered.

It belongs to the universal ribosomal protein uS13 family. In terms of assembly, part of the 30S ribosomal subunit. Forms a loose heterodimer with protein S19. Forms two bridges to the 50S subunit in the 70S ribosome.

Functionally, located at the top of the head of the 30S subunit, it contacts several helices of the 16S rRNA. In the 70S ribosome it contacts the 23S rRNA (bridge B1a) and protein L5 of the 50S subunit (bridge B1b), connecting the 2 subunits; these bridges are implicated in subunit movement. Contacts the tRNAs in the A and P-sites. The protein is Small ribosomal subunit protein uS13 of Corynebacterium aurimucosum (strain ATCC 700975 / DSM 44827 / CIP 107346 / CN-1) (Corynebacterium nigricans).